Here is a 1423-residue protein sequence, read N- to C-terminus: Interphotoreceptor matrix proteoglycan 2 (1423 aa).

The N-terminal stretch at 1 to 27 (MFAFLWKISLCLLVLGVITGDPQAVAA) is a signal peptide. Residues 28-1289 (EEKQAKDASP…EYVSEPLVVG (1262 aa)) lie on the Extracellular side of the membrane. Asparagine 150 is a glycosylation site (N-linked (GlcNAc...) asparagine). An SEA 1 domain is found at 245–358 (TEQMIEFSIV…NPTVVYTISD (114 aa)). Residues 265 to 273 (SDPDTAKYQ) form a hyaluronan-binding motif involved in chondroitin sulfate A-binding region. Residues asparagine 325 and asparagine 375 are each glycosylated (N-linked (GlcNAc...) asparagine). 3 disordered regions span residues 423–469 (AERP…DSEV), 522–559 (DSSD…DYTA), and 577–602 (TKRT…ADSL). Acidic residues predominate over residues 523–532 (SSDEFEDTGL). Low complexity predominate over residues 537-546 (LLPSSPSSHL). Over residues 577-587 (TKRTVTAEKEV) the composition is skewed to basic and acidic residues. N-linked (GlcNAc...) asparagine glycosylation is present at asparagine 676. Residues 886–907 (FEVSTDTSTEEQQSLDSSLADR) are disordered. Over residues 889-902 (STDTSTEEQQSLDS) the composition is skewed to polar residues. The SEA 2 domain occupies 1083 to 1196 (RALVVFFSLR…YSLDVESGEQ (114 aa)). Asparagine 1128, asparagine 1142, and asparagine 1160 each carry an N-linked (GlcNAc...) asparagine glycan. EGF-like domains follow at residues 1196–1234 (QADP…IDGL) and 1237–1279 (NSIC…EHCE). 5 disulfides stabilise this stretch: cysteine 1200–cysteine 1211, cysteine 1205–cysteine 1222, cysteine 1240–cysteine 1253, cysteine 1247–cysteine 1263, and cysteine 1265–cysteine 1278. Residues 1266–1274 (RVGENWWYR) form a hyaluronan-binding motif involved in chondroitin sulfate C-binding region. Residues 1290 to 1310 (IAIASVAGFLLVASAVIFFLA) traverse the membrane as a helical segment. Topologically, residues 1311-1423 (RTLRDQYTKS…FVRQHQMKLL (113 aa)) are cytoplasmic. Residues 1322–1327 (TEDSQG) form a hyaluronan-binding motif involved in chondroitin sulfate C-binding region.

In terms of processing, highly glycosylated (N- and O-linked carbohydrates). As to expression, expressed in retina.

The protein resides in the photoreceptor outer segment membrane. Its subcellular location is the photoreceptor inner segment membrane. It is found in the secreted. It localises to the extracellular space. The protein localises to the extracellular matrix. The protein resides in the interphotoreceptor matrix. Its function is as follows. Chondroitin sulfate- and hyaluronan-binding proteoglycan involved in the organization of interphotoreceptor matrix. This Gallus gallus (Chicken) protein is Interphotoreceptor matrix proteoglycan 2 (IMPG2).